Consider the following 796-residue polypeptide: Pathogenesis-related homeodomain protein (796 aa).

2 disordered regions span residues 34–57 (KKGKEVSNKRNSKQNKRKAEEELC) and 80–99 (VKKTRKRKSKRQQKDNKVEV). Positions 81-90 (KKTRKRKSKR) are enriched in basic residues. The PHD-type zinc finger occupies 190–247 (HIFCAECNSREAFPDNDIILCDGTCNRAFHQKCLDPPLETESIPPGDQGWFCKFCDCK). 3 disordered regions span residues 282-347 (SEAT…STGS), 393-422 (LQEQGSEDEDWGPNDRRKRKRESDAGSTLV), and 511-736 (NRKT…TEEE). Acidic residues predominate over residues 292-303 (WPSDDSKDDDYD). The homeobox DNA-binding region spans 452-511 (GGRRRMFRLPRNAVEKLRQVFAETELPSKAVRDRLAKELSLDPEKVNKWFKNTRYMALRN). 2 stretches are compositionally biased toward polar residues: residues 538–547 (ENNTETNEVQ) and 560–569 (ATNQNILSPC). Low complexity predominate over residues 570-580 (NNNQEEFQQEN). The span at 581 to 600 (VSFPSPTDESQQYLEQNDSS) shows a compositional bias: polar residues. 4 repeat units span residues 605–631 (PHEKQSSEISLKTAVEENETESKMMKE), 632–658 (PHEELSSEMSLKTAAEEKETESKMIEE), 659–685 (PHEELSREMSLKTAVEEKETESKMMEE), and 686–712 (PHDELNSEMSLSTAVEEKETGSKMTEE). Residues 605–735 (PHEKQSSEIS…KETGRKMTEE (131 aa)) are 5 X 27 AA tandem repeats. Composition is skewed to basic and acidic residues over residues 624 to 636 (TESKMMKEPHEEL), 645 to 690 (AAEE…HDEL), and 700 to 733 (VEEKETGSKMTEESHEELSNEMSLEEKETGRKMT). The 5; truncated repeat unit spans residues 713–735 (SHEELSNEMSLEEKETGRKMTEE). The interval 738–759 (LEAVMEMLCRTENKLLDVTQRL) is leucine-zipper.

This sequence belongs to the PHD-associated homeobox family.

It localises to the nucleus. Specifically binds to the fungal elicitor-responsive DNA element, 5'-CTAATTGTTTA-3', of the gene PR2 promoter. This Arabidopsis thaliana (Mouse-ear cress) protein is Pathogenesis-related homeodomain protein (PRH).